A 234-amino-acid polypeptide reads, in one-letter code: MAKLTKRMRVIRDKVDVTKQYDINEAVALLKELATAKFVESVDVAVNLGIDARKSDQNVRGATVLPHGTGRSVRVAVFAQGANAEAAKEAGAELVGMEDLADQIKKGEMNFDVVIASPDAMRVVGQLGQILGPRGLMPNPKVGTVTPNVAEAVKNAKAGQVRYRNDKNGIIHTTIGKVDFDSEKLKENLESLVVALKRAKPATAKGVYIKKISLSTTMGAGVAIDQSGLSAVVN.

It belongs to the universal ribosomal protein uL1 family. In terms of assembly, part of the 50S ribosomal subunit.

Binds directly to 23S rRNA. The L1 stalk is quite mobile in the ribosome, and is involved in E site tRNA release. Its function is as follows. Protein L1 is also a translational repressor protein, it controls the translation of the L11 operon by binding to its mRNA. The protein is Large ribosomal subunit protein uL1 of Yersinia enterocolitica serotype O:8 / biotype 1B (strain NCTC 13174 / 8081).